Here is a 160-residue protein sequence, read N- to C-terminus: Complexin-4 (160 aa).

The disordered stretch occupies residues 14-44; it reads KNLGFGGGSEEKKEEGGTSDPAAAKGMTREE. The residue at position 157 (Cys-157) is a Cysteine methyl ester. A lipid anchor (S-farnesyl cysteine) is attached at Cys-157. Positions 158–160 are cleaved as a propeptide — removed in mature form; sequence SVM.

It belongs to the complexin/synaphin family. In terms of assembly, weakly binds to the SNARE core complex containing SNAP25, VAMP2 and STX1A. Farnesylation mediates presynaptic targeting and is important for function in neurotransmitter release. As to expression, present specifically in the retina (at protein level). Expressed in the outer nuclear layer of the retina (at protein level). Strongly expressed at rod photoreceptor ribbon synapses (at protein level). Not expressed at conventional amacrine cell synapses, nor at cone photoreceptor ribbon synapses (at protein level). Weakly expressed at cone photoreceptor synaptic terminals (at protein level). Not expressed in the brain (at protein level).

It localises to the synapse. It is found in the cell membrane. Functionally, complexin that regulates SNARE protein complex-mediated synaptic vesicle fusion. Required for the maintenance of synaptic ultrastructure in the adult retina. Positively regulates synaptic transmission through synaptic vesicle availability and exocytosis of neurotransmitters at photoreceptor ribbon synapses in the retina. Suppresses tonic photoreceptor activity and baseline 'noise' by suppression of Ca(2+) vesicle tonic release and the facilitation of evoked synchronous and asynchronous Ca(2+) vesicle release. This Mus musculus (Mouse) protein is Complexin-4 (Cplx4).